The chain runs to 298 residues: Tyrosine recombinase XerC (298 aa).

The region spanning 1 to 84 is the Core-binding (CB) domain; sequence MNHIQEAFLN…TLRTLYEYWM (84 aa). One can recognise a Tyr recombinase domain in the interval 105 to 286; that stretch reads YLPQFSLEEE…SNQQLRKVYL (182 aa). Catalysis depends on residues Arg145, Lys169, His238, Arg241, and His264. Tyr273 (O-(3'-phospho-DNA)-tyrosine intermediate) is an active-site residue.

It belongs to the 'phage' integrase family. XerC subfamily. In terms of assembly, forms a cyclic heterotetrameric complex composed of two molecules of XerC and two molecules of XerD.

Its subcellular location is the cytoplasm. Functionally, site-specific tyrosine recombinase, which acts by catalyzing the cutting and rejoining of the recombining DNA molecules. The XerC-XerD complex is essential to convert dimers of the bacterial chromosome into monomers to permit their segregation at cell division. It also contributes to the segregational stability of plasmids. The chain is Tyrosine recombinase XerC from Staphylococcus aureus.